The sequence spans 181 residues: Ribulose bisphosphate carboxylase small subunit, chloroplastic 1 (181 aa).

A chloroplast-targeting transit peptide spans 1–57 (MASSIVSSAAVATRSNVAQASMVAPFTGLKSAASFPVTKKNNNVDITSLASNGGRVR).

This sequence belongs to the RuBisCO small chain family. In terms of assembly, heterohexadecamer of 8 large and 8 small subunits.

The protein resides in the plastid. It is found in the chloroplast. In terms of biological role, ruBisCO catalyzes two reactions: the carboxylation of D-ribulose 1,5-bisphosphate, the primary event in carbon dioxide fixation, as well as the oxidative fragmentation of the pentose substrate. Both reactions occur simultaneously and in competition at the same active site. Although the small subunit is not catalytic it is essential for maximal activity. The chain is Ribulose bisphosphate carboxylase small subunit, chloroplastic 1 from Solanum tuberosum (Potato).